Consider the following 311-residue polypeptide: Phosphoglycerate mutase 2 (311 aa).

Substrate contacts are provided by residues R16–N23, C29–G30, R73, E126–Y129, K137, R153–R154, and G243–S244. The active-site Tele-phosphohistidine intermediate is the H17. The active-site Proton donor/acceptor is E126.

The protein belongs to the phosphoglycerate mutase family. BPG-dependent PGAM subfamily.

Its subcellular location is the cytoplasm. The catalysed reaction is (2R)-2-phosphoglycerate = (2R)-3-phosphoglycerate. It participates in carbohydrate degradation; glycolysis; pyruvate from D-glyceraldehyde 3-phosphate: step 3/5. Could be non-functional. This chain is Phosphoglycerate mutase 2 (GPM2), found in Saccharomyces cerevisiae (strain ATCC 204508 / S288c) (Baker's yeast).